Reading from the N-terminus, the 444-residue chain is Glutamyl-tRNA(Gln) amidotransferase subunit D (444 aa).

One can recognise an Asparaginase/glutaminase domain in the interval 92–424; that stretch reads SEIKIISTGG…EKIQNLMITN (333 aa). Catalysis depends on residues threonine 102, threonine 178, aspartate 179, and lysine 257.

The protein belongs to the asparaginase 1 family. GatD subfamily. In terms of assembly, heterodimer of GatD and GatE.

The catalysed reaction is L-glutamyl-tRNA(Gln) + L-glutamine + ATP + H2O = L-glutaminyl-tRNA(Gln) + L-glutamate + ADP + phosphate + H(+). In terms of biological role, allows the formation of correctly charged Gln-tRNA(Gln) through the transamidation of misacylated Glu-tRNA(Gln) in organisms which lack glutaminyl-tRNA synthetase. The reaction takes place in the presence of glutamine and ATP through an activated gamma-phospho-Glu-tRNA(Gln). The GatDE system is specific for glutamate and does not act on aspartate. In Saccharolobus solfataricus (strain ATCC 35092 / DSM 1617 / JCM 11322 / P2) (Sulfolobus solfataricus), this protein is Glutamyl-tRNA(Gln) amidotransferase subunit D.